We begin with the raw amino-acid sequence, 1017 residues long: Fanconi-associated nuclease 1 (1017 aa).

The segment covering Met1–Lys10 has biased composition (basic and acidic residues). Residues Met1–Lys23 form a disordered region. Positions Lys11 to Lys23 are enriched in basic residues. A D-box motif is present at residues Arg14–Asn22. Residues Lys41 to Phe69 form a UBZ4-type zinc finger. Residues Cys44, Cys47, His59, and Cys64 each contribute to the Zn(2+) site. Disordered regions lie at residues Glu95–Val121 and Ile170–Val189. A compositionally biased stretch (polar residues) spans Ser179–Val189. Ser180 carries the post-translational modification Phosphoserine. Residues Lys212–Asn214 carry the KEN box motif. Residues Ser671–Gln696 adopt a coiled-coil conformation. Mn(2+) is bound by residues Glu834, Asp960, Glu975, and Val976. The 113-residue stretch at Glu895–Val1007 folds into the VRR-NUC domain.

The protein belongs to the FAN1 family. In terms of assembly, interacts with FANCD2 (when monoubiquitinated). Interacts with FANCI, MLH1, MLH3 and PMS2. Mn(2+) is required as a cofactor. It depends on Mg(2+) as a cofactor. Ubiquitinated and degraded during mitotic exit by the APC/C-Cdh1 complex.

Its subcellular location is the nucleus. It carries out the reaction Hydrolytically removes 5'-nucleotides successively from the 3'-hydroxy termini of 3'-hydroxy-terminated oligonucleotides.. Nuclease required for the repair of DNA interstrand cross-links (ICL) recruited at sites of DNA damage by monoubiquitinated FANCD2. Specifically involved in repair of ICL-induced DNA breaks by being required for efficient homologous recombination, probably in the resolution of homologous recombination intermediates. Not involved in DNA double-strand breaks resection. Acts as a 5'-3' exonuclease that anchors at a cut end of DNA and cleaves DNA successively at every third nucleotide, allowing to excise an ICL from one strand through flanking incisions. Probably keeps excising with 3'-flap annealing until it reaches and unhooks the ICL. Acts at sites that have a 5'-terminal phosphate anchor at a nick or a 1- or 2-nucleotide flap and is augmented by a 3' flap. Also has endonuclease activity toward 5'-flaps. In Homo sapiens (Human), this protein is Fanconi-associated nuclease 1.